Reading from the N-terminus, the 154-residue chain is Aspartate carbamoyltransferase regulatory chain (154 aa).

Zn(2+)-binding residues include Cys-109, Cys-114, Cys-138, and Cys-141.

This sequence belongs to the PyrI family. As to quaternary structure, contains catalytic and regulatory chains. Zn(2+) serves as cofactor.

In terms of biological role, involved in allosteric regulation of aspartate carbamoyltransferase. This is Aspartate carbamoyltransferase regulatory chain from Tolumonas auensis (strain DSM 9187 / NBRC 110442 / TA 4).